The chain runs to 141 residues: Hemoglobin subunit alpha (141 aa).

The 141-residue stretch at 1-141 (VLSPADKSNV…VSTVLTSKYR (141 aa)) folds into the Globin domain. Phosphoserine is present on S3. N6-succinyllysine is present on residues K7 and K11. K16 carries the N6-acetyllysine; alternate modification. Residue K16 is modified to N6-succinyllysine; alternate. Y24 carries the post-translational modification Phosphotyrosine. The residue at position 35 (S35) is a Phosphoserine. The residue at position 40 (K40) is an N6-succinyllysine. S49 carries the phosphoserine modification. H58 provides a ligand contact to O2. H87 is a binding site for heme b. The residue at position 102 (S102) is a Phosphoserine. T108 is subject to Phosphothreonine. S124 and S131 each carry phosphoserine. Residues T134 and T137 each carry the phosphothreonine modification. The residue at position 138 (S138) is a Phosphoserine.

The protein belongs to the globin family. As to quaternary structure, heterotetramer of two alpha chains and two beta chains. Red blood cells.

Involved in oxygen transport from the lung to the various peripheral tissues. In terms of biological role, hemopressin acts as an antagonist peptide of the cannabinoid receptor CNR1. Hemopressin-binding efficiently blocks cannabinoid receptor CNR1 and subsequent signaling. The polypeptide is Hemoglobin subunit alpha (HBA) (Leontocebus fuscicollis (Brown-mantled tamarin)).